We begin with the raw amino-acid sequence, 325 residues long: Replication factor C small subunit (325 aa).

Residue 54–61 coordinates ATP; that stretch reads GPAGTGKT.

The protein belongs to the activator 1 small subunits family. RfcS subfamily. In terms of assembly, heteromultimer composed of small subunits (RfcS) and large subunits (RfcL).

Functionally, part of the RFC clamp loader complex which loads the PCNA sliding clamp onto DNA. This is Replication factor C small subunit from Haloarcula marismortui (strain ATCC 43049 / DSM 3752 / JCM 8966 / VKM B-1809) (Halobacterium marismortui).